The following is a 437-amino-acid chain: UDP-N-acetylmuramate--L-alanine ligase (437 aa).

ATP is bound at residue 114-120 (GTHGKTS).

It belongs to the MurCDEF family.

It localises to the cytoplasm. The catalysed reaction is UDP-N-acetyl-alpha-D-muramate + L-alanine + ATP = UDP-N-acetyl-alpha-D-muramoyl-L-alanine + ADP + phosphate + H(+). The protein operates within cell wall biogenesis; peptidoglycan biosynthesis. Its function is as follows. Cell wall formation. This chain is UDP-N-acetylmuramate--L-alanine ligase, found in Lactobacillus helveticus (strain DPC 4571).